Reading from the N-terminus, the 629-residue chain is MPSDANEMQARLLQLFEHSTLSTKAKFGLRVIRDPKLAGIGILGRGKIFSCFHEDHLEEASRLAEVLVGAETFDEFIDLCHQCRDFVNEALFVYSLSVAILHRPDCHGISLPPIQEIFPDKFVPVETIYKAFKEATRHADKTDDIIVDMEATGTIMDPEYNLAYYREDIGINAHHWHWHVVYPSAWDSVKMHMRKDRKGELFFYMHQQMCARYDCERLSNGLARMIPFHNFHEPLEGYNPHLSSTQNGLPYAFRPEPMTLCDMHDVSVQDLERWRERILDAINLGEVTDPNGDEYALDETFGIDVLGAIIESSRDSKNRESYGSLHNWGHVLMANIVDPDGKYQTNPGVMDDTATSLRDPIFYRWHRFIDDMFQEFKRKLKPYTKDQLSFTGVEIKNVKVHAHEENVITTTFVEDLLEISNAFNFGRTGAVKVRYQHLDHEPFVYDIEVENHSARLRHGTCRIFLAPVHDELQNQLTPEELRRLMIELDRFRVELKPGVNHNHRHSRDSSVTISKQPKFDELLKGKGTNNANEYCSCGWPDHLLVPKGNDRGMPFHLCVMITDYLYDLVGDYGYDTPCVDAVSYCGAKDSLYPDRRAMGFPFDRPIPEGHASNLHQPNVSFSQIKIQHH.

The Cu cation site is built by H175, H179, H206, H326, H330, and H366. An N-linked (GlcNAc...) asparagine glycan is attached at N451. C537 and C585 are oxidised to a cystine. N-linked (GlcNAc...) asparagine glycosylation is present at N618.

It belongs to the tyrosinase family. Hemocyanin subfamily. As to quaternary structure, tarantula hemocyanin is a 24-chain polymer with seven different chains identified. As to expression, hemolymph.

The protein resides in the secreted. Its subcellular location is the extracellular space. Hemocyanins are copper-containing oxygen carriers occurring freely dissolved in the hemolymph of many mollusks and arthropods. The chain is Hemocyanin C chain (HCC) from Aphonopelma sp. (American tarantula).